The chain runs to 208 residues: MRVNKIKIYGSDSIGLFGYIANDIAVLSEVISKEEEKIIKDTLGLEGIVKTTIAGTPTVGSFIIGKKDLIIVPSSIYEEELKKLEELFRVEVVDVVNNALGNNYYYWPKKNLLFAAEDTKKEAKLLAKKLNADLYLIDTDIEVGSSLIGNSKMLLHNPDIYIDIEDAKPVTLNMGDKFVGAAALLNDKGIVVGSKTTGIELIELQDLF.

It belongs to the eIF-6 family.

Binds to the 50S ribosomal subunit and prevents its association with the 30S ribosomal subunit to form the 70S initiation complex. This chain is Translation initiation factor 6 (eif6), found in Nanoarchaeum equitans (strain Kin4-M).